The primary structure comprises 261 residues: Cytochrome c oxidase subunit 3 (261 aa).

Residues 1-15 (MTHQTHAYHMVNPSP) are Mitochondrial matrix-facing. A helical transmembrane segment spans residues 16 to 34 (WPLTGALSALLMTSGLAMW). Residues 35-40 (FHYNSM) lie on the Mitochondrial intermembrane side of the membrane. The helical transmembrane segment at 41–66 (LLLTLGLMTNLLTMYQWWRDIVREST) threads the bilayer. Residues 67–72 (FQGHHT) are Mitochondrial matrix-facing. Residues 73–105 (LVVQKGLRYGMILFIISEVFFFSGFFWAFYHSS) traverse the membrane as a helical segment. At 106–128 (LAPTPELGGCWPPTGIHPLNPME) the chain is on the mitochondrial intermembrane side. Residues 129-152 (VPLLNTSVLLASGVSITWAHHSLM) traverse the membrane as a helical segment. Residues 153–155 (EGN) lie on the Mitochondrial matrix side of the membrane. Residues 156–183 (RKHMLQALFITISLGVYFTLLQASEYYE) form a helical membrane-spanning segment. The Mitochondrial intermembrane portion of the chain corresponds to 184–190 (APFTISD). A helical transmembrane segment spans residues 191-223 (GIYGSTFFVATGFHGLHVIIGSTFLIVCFLRQL). Residues 224–232 (KFHFTSNHH) are Mitochondrial matrix-facing. A helical transmembrane segment spans residues 233–256 (FGFEAAAWYWHFVDVVWLFLYVSI). Residues 257–261 (YWWGS) are Mitochondrial intermembrane-facing.

Belongs to the cytochrome c oxidase subunit 3 family. In terms of assembly, component of the cytochrome c oxidase (complex IV, CIV), a multisubunit enzyme composed of 14 subunits. The complex is composed of a catalytic core of 3 subunits MT-CO1, MT-CO2 and MT-CO3, encoded in the mitochondrial DNA, and 11 supernumerary subunits COX4I, COX5A, COX5B, COX6A, COX6B, COX6C, COX7A, COX7B, COX7C, COX8 and NDUFA4, which are encoded in the nuclear genome. The complex exists as a monomer or a dimer and forms supercomplexes (SCs) in the inner mitochondrial membrane with NADH-ubiquinone oxidoreductase (complex I, CI) and ubiquinol-cytochrome c oxidoreductase (cytochrome b-c1 complex, complex III, CIII), resulting in different assemblies (supercomplex SCI(1)III(2)IV(1) and megacomplex MCI(2)III(2)IV(2)).

The protein resides in the mitochondrion inner membrane. The catalysed reaction is 4 Fe(II)-[cytochrome c] + O2 + 8 H(+)(in) = 4 Fe(III)-[cytochrome c] + 2 H2O + 4 H(+)(out). In terms of biological role, component of the cytochrome c oxidase, the last enzyme in the mitochondrial electron transport chain which drives oxidative phosphorylation. The respiratory chain contains 3 multisubunit complexes succinate dehydrogenase (complex II, CII), ubiquinol-cytochrome c oxidoreductase (cytochrome b-c1 complex, complex III, CIII) and cytochrome c oxidase (complex IV, CIV), that cooperate to transfer electrons derived from NADH and succinate to molecular oxygen, creating an electrochemical gradient over the inner membrane that drives transmembrane transport and the ATP synthase. Cytochrome c oxidase is the component of the respiratory chain that catalyzes the reduction of oxygen to water. Electrons originating from reduced cytochrome c in the intermembrane space (IMS) are transferred via the dinuclear copper A center (CU(A)) of subunit 2 and heme A of subunit 1 to the active site in subunit 1, a binuclear center (BNC) formed by heme A3 and copper B (CU(B)). The BNC reduces molecular oxygen to 2 water molecules using 4 electrons from cytochrome c in the IMS and 4 protons from the mitochondrial matrix. The protein is Cytochrome c oxidase subunit 3 (MT-CO3) of Ceratotherium simum (White rhinoceros).